Consider the following 282-residue polypeptide: 4-hydroxybenzoate octaprenyltransferase (282 aa).

Transmembrane regions (helical) follow at residues 17–37, 40–60, 90–110, 113–133, 135–155, 163–183, 207–227, 231–251, and 262–282; these read IGIL…NQGF, IDLL…GCVI, AFIL…KLPI, FYFA…KRFL, APQL…FIAS, FVVL…MYAM, LIIA…AINK, WFFY…LKLI, and AFLV…LALI.

Belongs to the UbiA prenyltransferase family. The cofactor is Mg(2+).

It localises to the cell inner membrane. The enzyme catalyses all-trans-octaprenyl diphosphate + 4-hydroxybenzoate = 4-hydroxy-3-(all-trans-octaprenyl)benzoate + diphosphate. It participates in cofactor biosynthesis; ubiquinone biosynthesis. Functionally, catalyzes the prenylation of para-hydroxybenzoate (PHB) with an all-trans polyprenyl group. Mediates the second step in the final reaction sequence of ubiquinone-8 (UQ-8) biosynthesis, which is the condensation of the polyisoprenoid side chain with PHB, generating the first membrane-bound Q intermediate 3-octaprenyl-4-hydroxybenzoate. This chain is 4-hydroxybenzoate octaprenyltransferase, found in Legionella pneumophila (strain Paris).